The chain runs to 85 residues: uncharacterized protein (85 aa).

This is an uncharacterized protein from Treponema pallidum (strain Nichols).